A 154-amino-acid polypeptide reads, in one-letter code: OCIA domain-containing protein 2 (154 aa).

An OCIA domain is found at Met1–Ala120. Lys41 bears the N6-acetyllysine mark.

In terms of assembly, interacts (via OCIA domain) with OCIAD1/ASRIJ and STAT3. As to expression, abundant in kidney, liver and brain.

The protein localises to the endosome. Its subcellular location is the mitochondrion. The protein resides in the mitochondrion inner membrane. In terms of biological role, has an essential role in the assembly of mitochondrial respiratory chain complex III. Is also required for STAT3 activation and plays a role in cell migration. This is OCIA domain-containing protein 2 (Ociad2) from Mus musculus (Mouse).